Reading from the N-terminus, the 769-residue chain is Probable beta-glucosidase M (769 aa).

The first 22 residues, methionine 1–serine 22, serve as a signal peptide directing secretion. N-linked (GlcNAc...) asparagine glycans are attached at residues asparagine 28, asparagine 75, and asparagine 262. Aspartate 290 is a catalytic residue. N-linked (GlcNAc...) asparagine glycosylation is found at asparagine 318, asparagine 325, asparagine 396, asparagine 437, asparagine 510, asparagine 546, and asparagine 625.

Belongs to the glycosyl hydrolase 3 family.

It is found in the secreted. It carries out the reaction Hydrolysis of terminal, non-reducing beta-D-glucosyl residues with release of beta-D-glucose.. It functions in the pathway glycan metabolism; cellulose degradation. Its function is as follows. Beta-glucosidases are one of a number of cellulolytic enzymes involved in the degradation of cellulosic biomass. Catalyzes the last step releasing glucose from the inhibitory cellobiose. This is Probable beta-glucosidase M (bglM) from Aspergillus fumigatus (strain CBS 144.89 / FGSC A1163 / CEA10) (Neosartorya fumigata).